A 437-amino-acid polypeptide reads, in one-letter code: Trigger factor (437 aa).

The PPIase FKBP-type domain occupies 164–249 (GDFAKFDFEG…LHEIQCKKIG (86 aa)).

Belongs to the FKBP-type PPIase family. Tig subfamily.

Its subcellular location is the cytoplasm. It catalyses the reaction [protein]-peptidylproline (omega=180) = [protein]-peptidylproline (omega=0). In terms of biological role, involved in protein export. Acts as a chaperone by maintaining the newly synthesized protein in an open conformation. Functions as a peptidyl-prolyl cis-trans isomerase. The protein is Trigger factor of Campylobacter hominis (strain ATCC BAA-381 / DSM 21671 / CCUG 45161 / LMG 19568 / NCTC 13146 / CH001A).